The primary structure comprises 480 residues: tRNA-2-methylthio-N(6)-dimethylallyladenosine synthase (480 aa).

Residues 29-145 (GSFWIQTFGC…LEALLTQVDN (117 aa)) form the MTTase N-terminal domain. Residues cysteine 38, cysteine 74, cysteine 108, cysteine 180, cysteine 184, and cysteine 187 each contribute to the [4Fe-4S] cluster site. Positions 166–403 (RDSTICAWVN…NALVERIALQ (238 aa)) constitute a Radical SAM core domain. The 69-residue stretch at 406 to 474 (SRYSGKVEQV…AFSLSGTPCE (69 aa)) folds into the TRAM domain.

The protein belongs to the methylthiotransferase family. MiaB subfamily. As to quaternary structure, monomer. The cofactor is [4Fe-4S] cluster.

The protein localises to the cytoplasm. The catalysed reaction is N(6)-dimethylallyladenosine(37) in tRNA + (sulfur carrier)-SH + AH2 + 2 S-adenosyl-L-methionine = 2-methylsulfanyl-N(6)-dimethylallyladenosine(37) in tRNA + (sulfur carrier)-H + 5'-deoxyadenosine + L-methionine + A + S-adenosyl-L-homocysteine + 2 H(+). In terms of biological role, catalyzes the methylthiolation of N6-(dimethylallyl)adenosine (i(6)A), leading to the formation of 2-methylthio-N6-(dimethylallyl)adenosine (ms(2)i(6)A) at position 37 in tRNAs that read codons beginning with uridine. The polypeptide is tRNA-2-methylthio-N(6)-dimethylallyladenosine synthase (Prochlorococcus marinus (strain MIT 9313)).